We begin with the raw amino-acid sequence, 333 residues long: Tetraacyldisaccharide 4'-kinase (333 aa).

ATP is bound at residue 55-62; it reads TAGGNGKT.

The protein belongs to the LpxK family.

The catalysed reaction is a lipid A disaccharide + ATP = a lipid IVA + ADP + H(+). It functions in the pathway glycolipid biosynthesis; lipid IV(A) biosynthesis; lipid IV(A) from (3R)-3-hydroxytetradecanoyl-[acyl-carrier-protein] and UDP-N-acetyl-alpha-D-glucosamine: step 6/6. Transfers the gamma-phosphate of ATP to the 4'-position of a tetraacyldisaccharide 1-phosphate intermediate (termed DS-1-P) to form tetraacyldisaccharide 1,4'-bis-phosphate (lipid IVA). This Proteus mirabilis (strain HI4320) protein is Tetraacyldisaccharide 4'-kinase.